The following is a 561-amino-acid chain: DNA ligase B (561 aa).

Lys125 serves as the catalytic N6-AMP-lysine intermediate.

The protein belongs to the NAD-dependent DNA ligase family. LigB subfamily.

The enzyme catalyses NAD(+) + (deoxyribonucleotide)n-3'-hydroxyl + 5'-phospho-(deoxyribonucleotide)m = (deoxyribonucleotide)n+m + AMP + beta-nicotinamide D-nucleotide.. Its function is as follows. Catalyzes the formation of phosphodiester linkages between 5'-phosphoryl and 3'-hydroxyl groups in double-stranded DNA using NAD as a coenzyme and as the energy source for the reaction. The sequence is that of DNA ligase B from Salmonella newport (strain SL254).